Consider the following 249-residue polypeptide: Pyridoxine 5'-phosphate synthase (249 aa).

Asn-7 lines the 3-amino-2-oxopropyl phosphate pocket. 9 to 10 (DH) is a binding site for 1-deoxy-D-xylulose 5-phosphate. Position 18 (Arg-18) interacts with 3-amino-2-oxopropyl phosphate. His-43 acts as the Proton acceptor in catalysis. 2 residues coordinate 1-deoxy-D-xylulose 5-phosphate: Arg-45 and His-50. Catalysis depends on Glu-70, which acts as the Proton acceptor. Thr-100 contributes to the 1-deoxy-D-xylulose 5-phosphate binding site. Residue His-190 is the Proton donor of the active site. 3-amino-2-oxopropyl phosphate contacts are provided by residues Gly-191 and 212 to 213 (GH).

This sequence belongs to the PNP synthase family. In terms of assembly, homooctamer; tetramer of dimers.

It is found in the cytoplasm. The catalysed reaction is 3-amino-2-oxopropyl phosphate + 1-deoxy-D-xylulose 5-phosphate = pyridoxine 5'-phosphate + phosphate + 2 H2O + H(+). Its pathway is cofactor biosynthesis; pyridoxine 5'-phosphate biosynthesis; pyridoxine 5'-phosphate from D-erythrose 4-phosphate: step 5/5. Catalyzes the complicated ring closure reaction between the two acyclic compounds 1-deoxy-D-xylulose-5-phosphate (DXP) and 3-amino-2-oxopropyl phosphate (1-amino-acetone-3-phosphate or AAP) to form pyridoxine 5'-phosphate (PNP) and inorganic phosphate. This is Pyridoxine 5'-phosphate synthase from Synechococcus sp. (strain CC9605).